The chain runs to 191 residues: Protein GrpE (191 aa).

This sequence belongs to the GrpE family. In terms of assembly, homodimer.

It is found in the cytoplasm. In terms of biological role, participates actively in the response to hyperosmotic and heat shock by preventing the aggregation of stress-denatured proteins, in association with DnaK and GrpE. It is the nucleotide exchange factor for DnaK and may function as a thermosensor. Unfolded proteins bind initially to DnaJ; upon interaction with the DnaJ-bound protein, DnaK hydrolyzes its bound ATP, resulting in the formation of a stable complex. GrpE releases ADP from DnaK; ATP binding to DnaK triggers the release of the substrate protein, thus completing the reaction cycle. Several rounds of ATP-dependent interactions between DnaJ, DnaK and GrpE are required for fully efficient folding. The polypeptide is Protein GrpE (Listeria monocytogenes serotype 1/2a (strain 10403S)).